The following is a 150-amino-acid chain: uncharacterized protein (150 aa).

Positions 1–21 are cleaved as a signal peptide; the sequence is MAMEMAMMGLLGTVVGASAMG.

This is an uncharacterized protein from Mycobacterium tuberculosis (strain CDC 1551 / Oshkosh).